A 58-amino-acid chain; its full sequence is MDRIIRGKRDHILHCPLAAYSSNPRKYPYVKNSLRQDSLWSRGSATFPVTLWSKVILK.

This is an uncharacterized protein from Saccharomyces cerevisiae (strain ATCC 204508 / S288c) (Baker's yeast).